A 216-amino-acid chain; its full sequence is Probable GTP-binding protein EngB (216 aa).

Residues 24–205 (QTPELAFVGR…WARIASAATD (182 aa)) form the EngB-type G domain. Residues 32–39 (GRSNVGKS), 59–63 (GRTRA), 86–89 (DLPG), 153–156 (TKMD), and 184–186 (FSA) each bind GTP. 2 residues coordinate Mg(2+): S39 and T61.

Belongs to the TRAFAC class TrmE-Era-EngA-EngB-Septin-like GTPase superfamily. EngB GTPase family. It depends on Mg(2+) as a cofactor.

In terms of biological role, necessary for normal cell division and for the maintenance of normal septation. This Anaeromyxobacter sp. (strain Fw109-5) protein is Probable GTP-binding protein EngB.